The primary structure comprises 508 residues: Light-independent protochlorophyllide reductase subunit B (508 aa).

Position 36 (Asp36) interacts with [4Fe-4S] cluster. Asp294 (proton donor) is an active-site residue. 429 to 430 (GM) serves as a coordination point for substrate.

It belongs to the ChlB/BchB/BchZ family. In terms of assembly, protochlorophyllide reductase is composed of three subunits; ChlL, ChlN and ChlB. Forms a heterotetramer of two ChlB and two ChlN subunits. Requires [4Fe-4S] cluster as cofactor.

Its subcellular location is the plastid. The protein localises to the chloroplast. It catalyses the reaction chlorophyllide a + oxidized 2[4Fe-4S]-[ferredoxin] + 2 ADP + 2 phosphate = protochlorophyllide a + reduced 2[4Fe-4S]-[ferredoxin] + 2 ATP + 2 H2O. It participates in porphyrin-containing compound metabolism; chlorophyll biosynthesis (light-independent). Component of the dark-operative protochlorophyllide reductase (DPOR) that uses Mg-ATP and reduced ferredoxin to reduce ring D of protochlorophyllide (Pchlide) to form chlorophyllide a (Chlide). This reaction is light-independent. The NB-protein (ChlN-ChlB) is the catalytic component of the complex. This is Light-independent protochlorophyllide reductase subunit B from Pyropia yezoensis (Susabi-nori).